The following is a 416-amino-acid chain: Glutamyl-tRNA reductase (416 aa).

Residues 49-52 (TCNR), Ser-105, 110-112 (EPQ), and Gln-116 contribute to the substrate site. Residue Cys-50 is the Nucleophile of the active site. Residue 185 to 190 (GAGETI) coordinates NADP(+).

Belongs to the glutamyl-tRNA reductase family. Homodimer.

It catalyses the reaction (S)-4-amino-5-oxopentanoate + tRNA(Glu) + NADP(+) = L-glutamyl-tRNA(Glu) + NADPH + H(+). The protein operates within porphyrin-containing compound metabolism; protoporphyrin-IX biosynthesis; 5-aminolevulinate from L-glutamyl-tRNA(Glu): step 1/2. In terms of biological role, catalyzes the NADPH-dependent reduction of glutamyl-tRNA(Glu) to glutamate 1-semialdehyde (GSA). This is Glutamyl-tRNA reductase from Shewanella baltica (strain OS185).